The primary structure comprises 583 residues: Asparagine synthetase, root [glutamine-hydrolyzing] (583 aa).

Cys-2 acts as the For GATase activity in catalysis. The Glutamine amidotransferase type-2 domain occupies 2-185 (CGILAVLGCS…PGHLYSSKDS (184 aa)). Residues 50–54 (RLAIV), 75–77 (NGE), and Asp-98 contribute to the L-glutamine site. ATP is bound by residues Leu-231, Val-267, and 341–342 (SG). In terms of domain architecture, Asparagine synthetase spans 237–516 (DSSLVASITS…PQNSARLTVP (280 aa)).

In terms of tissue distribution, roots.

It catalyses the reaction L-aspartate + L-glutamine + ATP + H2O = L-asparagine + L-glutamate + AMP + diphosphate + H(+). Its pathway is amino-acid biosynthesis; L-asparagine biosynthesis; L-asparagine from L-aspartate (L-Gln route): step 1/1. This Pisum sativum (Garden pea) protein is Asparagine synthetase, root [glutamine-hydrolyzing] (AS2).